We begin with the raw amino-acid sequence, 226 residues long: UPF0173 metal-dependent hydrolase Tpet_1587 (226 aa).

This sequence belongs to the UPF0173 family.

This chain is UPF0173 metal-dependent hydrolase Tpet_1587, found in Thermotoga petrophila (strain ATCC BAA-488 / DSM 13995 / JCM 10881 / RKU-1).